The following is an 83-amino-acid chain: uncharacterized protein (83 aa).

This sequence belongs to the BolA/IbaG family.

This is an uncharacterized protein from Acinetobacter guillouiae (Acinetobacter genomosp. 11).